The primary structure comprises 251 residues: Triosephosphate isomerase (251 aa).

Asn-9–Lys-11 is a substrate binding site. The active-site Electrophile is the His-95. The active-site Proton acceptor is the Glu-167. Substrate-binding positions include Gly-173, Ser-213, and Gly-234–Gly-235. Position 213 is a phosphoserine (Ser-213).

This sequence belongs to the triosephosphate isomerase family. Homodimer.

Its subcellular location is the cytoplasm. The catalysed reaction is D-glyceraldehyde 3-phosphate = dihydroxyacetone phosphate. The protein operates within carbohydrate biosynthesis; gluconeogenesis. It functions in the pathway carbohydrate degradation; glycolysis; D-glyceraldehyde 3-phosphate from glycerone phosphate: step 1/1. Involved in the gluconeogenesis. Catalyzes stereospecifically the conversion of dihydroxyacetone phosphate (DHAP) to D-glyceraldehyde-3-phosphate (G3P). This Bacillus cereus (strain AH820) protein is Triosephosphate isomerase.